A 746-amino-acid chain; its full sequence is Chitin biosynthesis protein CHS6 (746 aa).

Positions 1–25 (MNLFWPSETKKQNEIPGGDYTPGNS) are disordered. The CHS5-binding stretch occupies residues 734–746 (LAWIADLDHTVQP).

The protein belongs to the CHAPS family. Component of the CHS5/6 complex composed of the 4 CHAPS proteins BCH1, BCH2, BUD7, and CHS6 as well as at least CHS5 and GTP-bound ARF1. The complex interacts with the cargo protein CHS3.

The protein localises to the golgi apparatus. It localises to the trans-Golgi network membrane. Functionally, member of the CHS5-ARF1P-binding proteins (CHAPS) which mediates export of specific cargo proteins, including chitin synthase CHS3. This Saccharomyces cerevisiae (strain ATCC 204508 / S288c) (Baker's yeast) protein is Chitin biosynthesis protein CHS6 (CHS6).